An 818-amino-acid polypeptide reads, in one-letter code: Phosphoinositide phosphatase SAC3 (818 aa).

Residues 153–546 form the SAC domain; it reads LCMVDLTKDF…GDTLAHQYGG (394 aa). The disordered stretch occupies residues 426–459; sequence SLSSSSDADTGDISPHTSSDDDNGDHDSLEKKSS. A Phosphatase catalytic core motif is present at residues 482–493; it reads RTNCIDCLDRTN. Residues 759-780 show a composition bias toward polar residues; sequence LTAETSSTENSVNGVGQSAPTI. Positions 759–800 are disordered; sequence LTAETSSTENSVNGVGQSAPTISESGSSSSKGKEPMGTKIRE. The segment covering 789 to 800 has biased composition (basic and acidic residues); the sequence is KGKEPMGTKIRE.

In terms of assembly, component of the PI(3,5)P2 regulatory complex at least composed of ATG18, SAC/FIG4, FAB1 and VAC14. The cofactor is Mg(2+). Ubiquitous with a higher level of expression in young seedlings than in other tissues.

It is found in the vacuole membrane. The catalysed reaction is a 1,2-diacyl-sn-glycero-3-phospho-(1D-myo-inositol-3,5-bisphosphate) + H2O = a 1,2-diacyl-sn-glycero-3-phospho-(1D-myo-inositol-3-phosphate) + phosphate. The PI(3,5)P2 regulatory complex regulates both the synthesis and turnover of phosphatidylinositol 3,5-bisphosphate (PtdIns(3,5)P2). The chain is Phosphoinositide phosphatase SAC3 (SAC3) from Arabidopsis thaliana (Mouse-ear cress).